We begin with the raw amino-acid sequence, 101 residues long: MSTSGAVDQYTVLTGDRSKIKDLLCSRLTECGWRDEVRLMCRNILMEKGTNNSFTVEQLIAEVTPKARTLVPDAVKKELLMKIRTILTEIEEEPDEPEDES.

Belongs to the ENY2 family. In terms of assembly, component of the nuclear pore complex (NPC)-associated TREX-2/AMEX complex (anchoring and mRNA export complex), composed of e(y)2, xmas and PCID2. Within the TREX-2/ AMEX complex, interactions with xmas is required for localization to the nuclear periphery. Component of the SAGA transcription coactivator-HAT complexes, at least composed of Ada2b, e(y)2, Pcaf/Gcn5, Taf10 and Nipped-A/Trrap. Within the SAGA complex, e(y)2, Sgf11, and not/nonstop form an additional subcomplex of SAGA called the DUB module (deubiquitination module). Component of the THO complex, composed of at least e(y)2, HPR1, THO2, THOC5, THOC6 and THOC7. Interacts with Taf9. Interacts with su(Hw) (via zinc fingers). Interacts with the nuclear pore complex (NPC). Interaction between the TREX-2/AMEX complex and the ORC complex is required for ORC localization to mRNPs, and consequently mRNA export. Within the TREX-2/AMEX-ORC complex, interacts with Orc6 and (via N-terminus or C-terminus) with Orc3. Interacts with the zinc finger protein CG9890. In terms of tissue distribution, ubiquitous.

The protein localises to the nucleus. It is found in the nucleoplasm. Its subcellular location is the cytoplasm. The protein resides in the nucleus membrane. Functionally, involved in mRNA export coupled transcription activation by association with both the TREX-2/AMEX and the SAGA complexes. The SAGA complex is a multiprotein complex that activates transcription by remodeling chromatin and mediating histone acetylation and deubiquitination. Within the SAGA complex, participates in a subcomplex that specifically deubiquitinates histone H2B. The SAGA complex is recruited to specific gene promoters by activators, where it is required for transcription. Required for nuclear receptor-mediated transactivation. Involved in transcription elongation by recruiting the THO complex onto nascent mRNA. The TREX-2/AMEX complex functions in docking export-competent ribonucleoprotein particles (mRNPs) to the nuclear entrance of the nuclear pore complex (nuclear basket). TREX-2/AMEX participates in mRNA export and accurate chromatin positioning in the nucleus by tethering genes to the nuclear periphery. Recruited to the su(Hw) insulators via its interaction with su(Hw) and participates in the barrier activity of such insulators. In contrast, it does not participate in the enhancer-blocking activity of the su(Hw) insulators. The sequence is that of Enhancer of yellow 2 transcription factor from Drosophila melanogaster (Fruit fly).